Here is a 280-residue protein sequence, read N- to C-terminus: Putative protein-tyrosine sulfotransferase (280 aa).

3'-phosphoadenylyl sulfate is bound at residue 16 to 20 (RSGTT). The cysteines at positions 34 and 89 are disulfide-linked. The Proton donor/acceptor role is filled by glutamate 37. A glycan (N-linked (GlcNAc...) asparagine) is linked at asparagine 57. 3 residues coordinate 3'-phosphoadenylyl sulfate: arginine 116, serine 124, and arginine 128. N-linked (GlcNAc...) asparagine glycosylation occurs at asparagine 136. A disulfide bridge links cysteine 158 with cysteine 165. 3'-phosphoadenylyl sulfate contacts are provided by residues tyrosine 170 and 215–224 (SASQVKNSIN).

It belongs to the protein sulfotransferase family.

The enzyme catalyses L-tyrosyl-[protein] + 3'-phosphoadenylyl sulfate = O-sulfo-L-tyrosine-[protein] + adenosine 3',5'-bisphosphate + H(+). Its function is as follows. Catalyzes the O-sulfation of tyrosine residues within acidic motifs of polypeptides, using 3'-phosphoadenylyl sulfate (PAPS) as cosubstrate. In Caenorhabditis briggsae, this protein is Putative protein-tyrosine sulfotransferase.